We begin with the raw amino-acid sequence, 270 residues long: Phosphatidate cytidylyltransferase (270 aa).

The next 8 helical transmembrane spans lie at 17 to 37 (FVVL…AILI), 55 to 75 (FFYV…FEEP), 81 to 101 (ILFI…SQVF), 104 to 124 (VAAF…FLPI), 129 to 149 (GAAN…FAYF), 170 to 190 (EGVI…RLVV), 193 to 213 (LLSV…TVAI), and 248 to 268 (IDGL…LEGV).

It belongs to the CDS family.

Its subcellular location is the cell membrane. It carries out the reaction a 1,2-diacyl-sn-glycero-3-phosphate + CTP + H(+) = a CDP-1,2-diacyl-sn-glycerol + diphosphate. Its pathway is phospholipid metabolism; CDP-diacylglycerol biosynthesis; CDP-diacylglycerol from sn-glycerol 3-phosphate: step 3/3. The protein is Phosphatidate cytidylyltransferase (cdsA) of Thermotoga maritima (strain ATCC 43589 / DSM 3109 / JCM 10099 / NBRC 100826 / MSB8).